The sequence spans 508 residues: UDP-N-acetylmuramyl-tripeptide synthetase (508 aa).

S35 lines the UDP-N-acetyl-alpha-D-muramoyl-L-alanyl-D-glutamate pocket. ATP is bound at residue 118–124 (GTDGKSS). UDP-N-acetyl-alpha-D-muramoyl-L-alanyl-D-glutamate is bound by residues 163 to 164 (ST), T190, and R200. K232 is subject to N6-carboxylysine.

Belongs to the MurCDEF family. MurE subfamily. Carboxylation is probably crucial for Mg(2+) binding and, consequently, for the gamma-phosphate positioning of ATP.

It is found in the cytoplasm. It functions in the pathway cell wall biogenesis; peptidoglycan biosynthesis. In terms of biological role, catalyzes the addition of an amino acid to the nucleotide precursor UDP-N-acetylmuramoyl-L-alanyl-D-glutamate (UMAG) in the biosynthesis of bacterial cell-wall peptidoglycan. The polypeptide is UDP-N-acetylmuramyl-tripeptide synthetase (Borrelia garinii subsp. bavariensis (strain ATCC BAA-2496 / DSM 23469 / PBi) (Borreliella bavariensis)).